Consider the following 320-residue polypeptide: Cytochrome f (320 aa).

Positions 1 to 35 (MQTRNAFSWIKKEITRSISVLLMIYIITRAPISNA) are cleaved as a signal peptide. Residues Tyr-36, Cys-56, Cys-59, and His-60 each coordinate heme. The helical transmembrane segment at 286-305 (VQGLLLFLASIILAQILLVL) threads the bilayer.

Belongs to the cytochrome f family. The 4 large subunits of the cytochrome b6-f complex are cytochrome b6, subunit IV (17 kDa polypeptide, petD), cytochrome f and the Rieske protein, while the 4 small subunits are PetG, PetL, PetM and PetN. The complex functions as a dimer. Heme serves as cofactor.

It is found in the plastid. The protein localises to the chloroplast thylakoid membrane. In terms of biological role, component of the cytochrome b6-f complex, which mediates electron transfer between photosystem II (PSII) and photosystem I (PSI), cyclic electron flow around PSI, and state transitions. This Pisum sativum (Garden pea) protein is Cytochrome f (petA).